The chain runs to 134 residues: NADH-quinone oxidoreductase subunit A (134 aa).

Helical transmembrane passes span 12-32 (FAIY…LAAL), 64-84 (FYLV…LFAW), and 93-113 (WVGF…LLYL).

Belongs to the complex I subunit 3 family. NDH-1 is composed of 14 different subunits. Subunits NuoA, H, J, K, L, M, N constitute the membrane sector of the complex.

The protein resides in the cell inner membrane. It carries out the reaction a quinone + NADH + 5 H(+)(in) = a quinol + NAD(+) + 4 H(+)(out). Functionally, NDH-1 shuttles electrons from NADH, via FMN and iron-sulfur (Fe-S) centers, to quinones in the respiratory chain. The immediate electron acceptor for the enzyme in this species is believed to be ubiquinone. Couples the redox reaction to proton translocation (for every two electrons transferred, four hydrogen ions are translocated across the cytoplasmic membrane), and thus conserves the redox energy in a proton gradient. This chain is NADH-quinone oxidoreductase subunit A, found in Aeromonas salmonicida (strain A449).